A 105-amino-acid chain; its full sequence is Integration host factor subunit alpha (105 aa).

Belongs to the bacterial histone-like protein family. In terms of assembly, heterodimer of an alpha and a beta chain.

Functionally, this protein is one of the two subunits of integration host factor, a specific DNA-binding protein that functions in genetic recombination as well as in transcriptional and translational control. The sequence is that of Integration host factor subunit alpha from Rhodospirillum rubrum (strain ATCC 11170 / ATH 1.1.1 / DSM 467 / LMG 4362 / NCIMB 8255 / S1).